We begin with the raw amino-acid sequence, 546 residues long: U3 small nucleolar RNA-associated protein 18 homolog (546 aa).

3 disordered regions span residues methionine 1–serine 55, serine 94–glycine 118, and asparagine 177–valine 205. Residues isoleucine 13 to glutamate 23 are compositionally biased toward basic and acidic residues. Residues aspartate 24–aspartate 35 are compositionally biased toward acidic residues. Serine 33 carries the phosphoserine modification. A compositionally biased stretch (basic and acidic residues) spans threonine 45–serine 55. Acidic residues-rich tracts occupy residues aspartate 101 to asparagine 117 and glutamate 193 to valine 205. 4 WD repeats span residues proline 242–isoleucine 281, lysine 372–lysine 411, valine 413–arginine 454, and serine 509–asparagine 545. The DWD box signature appears at leucine 389–arginine 404.

The protein belongs to the WD repeat UTP18 family.

The protein localises to the nucleus. The protein resides in the nucleolus. Involved in nucleolar processing of pre-18S ribosomal RNA. The sequence is that of U3 small nucleolar RNA-associated protein 18 homolog from Arabidopsis thaliana (Mouse-ear cress).